The primary structure comprises 385 residues: GTPase Obg (385 aa).

One can recognise an Obg domain in the interval 1–159 (MKFVDEATIL…REIQLELMLL (159 aa)). The region spanning 160–333 (ADVGMLGLPN…LCWDVMAFIN (174 aa)) is the OBG-type G domain. GTP-binding positions include 166–173 (GLPNAGKS), 191–195 (FTTLV), 213–216 (DIPG), 283–286 (NKAD), and 314–316 (SAA). Mg(2+)-binding residues include serine 173 and threonine 193. The segment covering 362–379 (QQEEAEETLDDDWDEDGV) has biased composition (acidic residues). The interval 362 to 385 (QQEEAEETLDDDWDEDGVETIYQR) is disordered.

This sequence belongs to the TRAFAC class OBG-HflX-like GTPase superfamily. OBG GTPase family. In terms of assembly, monomer. Mg(2+) serves as cofactor.

The protein localises to the cytoplasm. An essential GTPase which binds GTP, GDP and possibly (p)ppGpp with moderate affinity, with high nucleotide exchange rates and a fairly low GTP hydrolysis rate. Plays a role in control of the cell cycle, stress response, ribosome biogenesis and in those bacteria that undergo differentiation, in morphogenesis control. This is GTPase Obg from Sodalis glossinidius (strain morsitans).